The sequence spans 444 residues: Ribosomal protein uS12 methylthiotransferase RimO (444 aa).

Residues 2-118 (LKIALESLGC…IDKILKELSE (117 aa)) form the MTTase N-terminal domain. Positions 11, 47, 81, 155, 159, and 162 each coordinate [4Fe-4S] cluster. Residues 141–371 (STPSYMAYLK…MMIQQKISEE (231 aa)) enclose the Radical SAM core domain. A TRAM domain is found at 374-441 (DKKIGKTYEV…EYDLMGDVLY (68 aa)).

This sequence belongs to the methylthiotransferase family. RimO subfamily. It depends on [4Fe-4S] cluster as a cofactor.

The protein resides in the cytoplasm. It carries out the reaction L-aspartate(89)-[ribosomal protein uS12]-hydrogen + (sulfur carrier)-SH + AH2 + 2 S-adenosyl-L-methionine = 3-methylsulfanyl-L-aspartate(89)-[ribosomal protein uS12]-hydrogen + (sulfur carrier)-H + 5'-deoxyadenosine + L-methionine + A + S-adenosyl-L-homocysteine + 2 H(+). Catalyzes the methylthiolation of an aspartic acid residue of ribosomal protein uS12. The chain is Ribosomal protein uS12 methylthiotransferase RimO from Clostridioides difficile (strain 630) (Peptoclostridium difficile).